Reading from the N-terminus, the 393-residue chain is Chorismate synthase (393 aa).

Residues Arg-40 and Arg-46 each contribute to the NADP(+) site. Residues 129–131 (RSS), 249–250 (QA), Gly-301, 316–320 (KPIPT), and Arg-342 contribute to the FMN site.

The protein belongs to the chorismate synthase family. As to quaternary structure, homotetramer. It depends on FMNH2 as a cofactor.

The catalysed reaction is 5-O-(1-carboxyvinyl)-3-phosphoshikimate = chorismate + phosphate. It participates in metabolic intermediate biosynthesis; chorismate biosynthesis; chorismate from D-erythrose 4-phosphate and phosphoenolpyruvate: step 7/7. Functionally, catalyzes the anti-1,4-elimination of the C-3 phosphate and the C-6 proR hydrogen from 5-enolpyruvylshikimate-3-phosphate (EPSP) to yield chorismate, which is the branch point compound that serves as the starting substrate for the three terminal pathways of aromatic amino acid biosynthesis. This reaction introduces a second double bond into the aromatic ring system. This is Chorismate synthase from Geobacter sulfurreducens (strain ATCC 51573 / DSM 12127 / PCA).